The following is a 212-amino-acid chain: Peptide methionine sulfoxide reductase MsrA (212 aa).

Cys-52 is an active-site residue.

This sequence belongs to the MsrA Met sulfoxide reductase family.

The enzyme catalyses L-methionyl-[protein] + [thioredoxin]-disulfide + H2O = L-methionyl-(S)-S-oxide-[protein] + [thioredoxin]-dithiol. It catalyses the reaction [thioredoxin]-disulfide + L-methionine + H2O = L-methionine (S)-S-oxide + [thioredoxin]-dithiol. Functionally, has an important function as a repair enzyme for proteins that have been inactivated by oxidation. Catalyzes the reversible oxidation-reduction of methionine sulfoxide in proteins to methionine. The protein is Peptide methionine sulfoxide reductase MsrA of Cronobacter sakazakii (strain ATCC BAA-894) (Enterobacter sakazakii).